The sequence spans 196 residues: Endoribonuclease YbeY (196 aa).

Positions 120, 124, and 130 each coordinate Zn(2+).

Belongs to the endoribonuclease YbeY family. It depends on Zn(2+) as a cofactor.

Its subcellular location is the cytoplasm. Single strand-specific metallo-endoribonuclease involved in late-stage 70S ribosome quality control and in maturation of the 3' terminus of the 16S rRNA. This Corynebacterium glutamicum (strain R) protein is Endoribonuclease YbeY.